Consider the following 1209-residue polypeptide: DNA-directed RNA polymerase subunit beta (1209 aa).

A compositionally biased stretch (basic and acidic residues) spans 1173–1192 (QQEKKKLAEEAAKKDDKPDE). The disordered stretch occupies residues 1173 to 1209 (QQEKKKLAEEAAKKDDKPDEPVDESDSSTSSDDKVSK).

Belongs to the RNA polymerase beta chain family. As to quaternary structure, the RNAP catalytic core consists of 2 alpha, 1 beta, 1 beta' and 1 omega subunit. When a sigma factor is associated with the core the holoenzyme is formed, which can initiate transcription.

The enzyme catalyses RNA(n) + a ribonucleoside 5'-triphosphate = RNA(n+1) + diphosphate. Functionally, DNA-dependent RNA polymerase catalyzes the transcription of DNA into RNA using the four ribonucleoside triphosphates as substrates. This chain is DNA-directed RNA polymerase subunit beta, found in Lactobacillus johnsonii (strain CNCM I-12250 / La1 / NCC 533).